The sequence spans 259 residues: Protein GrpE (259 aa).

Disordered regions lie at residues 1-74 and 228-259; these read MNSD…IKGS and PGPKVINEEIPDQSASNQELSESVDGSTKDEN. Low complexity predominate over residues 17–40; that stretch reads SSQNNPSENSVSSPNSNESVNQVE. 2 stretches are compositionally biased toward polar residues: residues 56-73 and 240-253; these read VDTANEQSSTSCESNIKG and QSASNQELSESVDG.

It belongs to the GrpE family. Homodimer.

The protein localises to the cytoplasm. Participates actively in the response to hyperosmotic and heat shock by preventing the aggregation of stress-denatured proteins, in association with DnaK and GrpE. It is the nucleotide exchange factor for DnaK and may function as a thermosensor. Unfolded proteins bind initially to DnaJ; upon interaction with the DnaJ-bound protein, DnaK hydrolyzes its bound ATP, resulting in the formation of a stable complex. GrpE releases ADP from DnaK; ATP binding to DnaK triggers the release of the substrate protein, thus completing the reaction cycle. Several rounds of ATP-dependent interactions between DnaJ, DnaK and GrpE are required for fully efficient folding. The sequence is that of Protein GrpE from Prochlorococcus marinus (strain NATL2A).